The sequence spans 246 residues: 4-hydroxy-tetrahydrodipicolinate reductase (246 aa).

NAD(+) is bound by residues 8–13, D34, 74–76, and 101–104; these read GALGRM, GTT, and APNF. Residue H131 is the Proton donor/acceptor of the active site. Position 132 (H132) interacts with (S)-2,3,4,5-tetrahydrodipicolinate. Residue K135 is the Proton donor of the active site. 141 to 142 is a (S)-2,3,4,5-tetrahydrodipicolinate binding site; that stretch reads GT.

Belongs to the DapB family.

Its subcellular location is the cytoplasm. The catalysed reaction is (S)-2,3,4,5-tetrahydrodipicolinate + NAD(+) + H2O = (2S,4S)-4-hydroxy-2,3,4,5-tetrahydrodipicolinate + NADH + H(+). It carries out the reaction (S)-2,3,4,5-tetrahydrodipicolinate + NADP(+) + H2O = (2S,4S)-4-hydroxy-2,3,4,5-tetrahydrodipicolinate + NADPH + H(+). Its pathway is amino-acid biosynthesis; L-lysine biosynthesis via DAP pathway; (S)-tetrahydrodipicolinate from L-aspartate: step 4/4. In terms of biological role, catalyzes the conversion of 4-hydroxy-tetrahydrodipicolinate (HTPA) to tetrahydrodipicolinate. The chain is 4-hydroxy-tetrahydrodipicolinate reductase from Thermobifida fusca (strain YX).